We begin with the raw amino-acid sequence, 295 residues long: 3-hydroxy-5-phosphonooxypentane-2,4-dione thiolase (295 aa).

Catalysis depends on K203, which acts as the Schiff-base intermediate with substrate.

Belongs to the DeoC/FbaB aldolase family. As to quaternary structure, homodecamer.

It is found in the cytoplasm. The catalysed reaction is dihydroxyacetone phosphate + acetyl-CoA = 3-hydroxy-2,4-dioxopentyl phosphate + CoA. Its function is as follows. Involved in the degradation of phospho-AI-2, thereby terminating induction of the lsr operon and closing the AI-2 signaling cycle. Catalyzes the transfer of an acetyl moiety from 3-hydroxy-5-phosphonooxypentane-2,4-dione to CoA to form glycerone phosphate and acetyl-CoA. This chain is 3-hydroxy-5-phosphonooxypentane-2,4-dione thiolase, found in Klebsiella pneumoniae subsp. pneumoniae (strain ATCC 700721 / MGH 78578).